Consider the following 403-residue polypeptide: Argininosuccinate synthase (403 aa).

9 to 17 serves as a coordination point for ATP; that stretch reads AYSGGLDTS. Y86 lines the L-citrulline pocket. Residue G116 coordinates ATP. 3 residues coordinate L-aspartate: T118, N122, and D123. Residue N122 coordinates L-citrulline. R126, S174, S183, E259, and Y271 together coordinate L-citrulline.

Belongs to the argininosuccinate synthase family. Type 1 subfamily. Homotetramer.

The protein localises to the cytoplasm. It catalyses the reaction L-citrulline + L-aspartate + ATP = 2-(N(omega)-L-arginino)succinate + AMP + diphosphate + H(+). It participates in amino-acid biosynthesis; L-arginine biosynthesis; L-arginine from L-ornithine and carbamoyl phosphate: step 2/3. The protein is Argininosuccinate synthase of Shouchella clausii (strain KSM-K16) (Alkalihalobacillus clausii).